A 769-amino-acid polypeptide reads, in one-letter code: Polymeric immunoglobulin receptor (769 aa).

The first 18 residues, 1-18 (MRLSLFALLVTVFSGVST), serve as a signal peptide directing secretion. Topologically, residues 19–643 (QSPIFGPQDV…SAGGQSGSSK (625 aa)) are extracellular. Positions 21–126 (PIFGPQDVSS…RGLFFDVSLE (106 aa)) constitute an Ig-like V-type 1; required for binding to polymeric IgA and IgM domain. The cysteines at positions 40 and 110 are disulfide-linked. Residues Asn90, Asn135, and Asn206 are each glycosylated (N-linked (GlcNAc...) asparagine). Ig-like V-type domains lie at 135–237 (NDTH…DLQV), 240–341 (PEPE…VQAW), 353–457 (NSRS…LQVA), and 463–563 (PDLE…IYVA). Intrachain disulfides connect Cys152–Cys220, Cys257–Cys324, and Cys370–Cys440. Asn471 carries N-linked (GlcNAc...) asparagine glycosylation. The cysteines at positions 484 and 546 are disulfide-linked. Disordered regions lie at residues 569 to 604 (RGSPHINPTDANARAKDAPEEEAMESSVREDENKAN) and 619 to 640 (AGDQAQENRASGNAGSAGGQSG). Residues 595–604 (SVREDENKAN) show a composition bias toward basic and acidic residues. Residues 644-666 (VLFSTLVPLGLVLAVGAVAVWVA) form a helical membrane-spanning segment. At 667–769 (RVRHRKNVDR…AQVHDGPQEA (103 aa)) the chain is on the cytoplasmic side. A phosphoserine mark is found at Ser678, Ser687, Ser694, and Ser740. Positions 719 to 741 (EIETTTECTTEPEESKKAKRSSK) are disordered. Residues 731 to 741 (EESKKAKRSSK) show a composition bias toward basic and acidic residues.

As to quaternary structure, interacts (mainly via CDR1-like domain) with dimeric IgA. Interacts (mainly via CDR2-like domain) with pentameric IgM. Either free or part of the secretory IgA (sIgA) complex that consists of two, four or five IgA monomers, and two additional non-Ig polypeptides, namely the JCHAIN and the secretory component (the proteolytic product of PIGR). Free secretory component interacts with bacterial antigens toxA of C.difficile and eae of E.coli. In terms of processing, N-glycosylated. N-glycosylation is required for anchoring IgA molecules to mucus, but is not necessary for Ig binding.

It is found in the cell membrane. The protein resides in the secreted. Mediates selective transcytosis of polymeric IgA and IgM across mucosal epithelial cells. Binds polymeric IgA and IgM at the basolateral surface of epithelial cells. The complex is then transported across the cell to be secreted at the apical surface. During this process, a cleavage occurs that separates the extracellular (known as the secretory component) from the transmembrane segment. In terms of biological role, through its N-linked glycans ensures anchoring of secretory IgA (sIgA) molecules to mucus lining the epithelial surface to neutralize extracellular pathogens. On its own (free form) may act as a non-specific microbial scavenger to prevent pathogen interaction with epithelial cells. In Rattus norvegicus (Rat), this protein is Polymeric immunoglobulin receptor (Pigr).